Here is a 294-residue protein sequence, read N- to C-terminus: Elongation factor Ts (294 aa).

Positions 79–82 (TDFV) are involved in Mg(2+) ion dislocation from EF-Tu.

This sequence belongs to the EF-Ts family.

It is found in the cytoplasm. Functionally, associates with the EF-Tu.GDP complex and induces the exchange of GDP to GTP. It remains bound to the aminoacyl-tRNA.EF-Tu.GTP complex up to the GTP hydrolysis stage on the ribosome. The chain is Elongation factor Ts from Geobacillus sp. (strain WCH70).